The chain runs to 551 residues: Protein ROOT HAIR SPECIFIC 17 (551 aa).

A helical; Signal-anchor for type II membrane protein transmembrane segment spans residues 39–59; it reads LFPLVSAVSGCLLLILFSFST. Asn109 and Asn153 each carry an N-linked (GlcNAc...) asparagine glycan. Substrate is bound at residue 293–295; sequence HLR. N-linked (GlcNAc...) asparagine glycosylation is found at Asn405 and Asn465. The interval 515 to 539 is disordered; the sequence is KAKHVNEDDSSEYSEIGNVPISSRS.

Belongs to the glycosyltransferase GT106 family. Specifically expressed in the root hair.

It is found in the membrane. Its pathway is glycan metabolism. The protein is Protein ROOT HAIR SPECIFIC 17 of Arabidopsis thaliana (Mouse-ear cress).